The following is a 1217-amino-acid chain: Inactive disease resistance protein RPS4 (1217 aa).

The region spanning Pro14 to Leu175 is the TIR domain. The active site involves Glu88. The NB-ARC domain occupies Glu211–Glu472. LRR repeat units follow at residues His260 to Glu285, Pro436 to Asp459, Leu614 to Pro636, Ile637 to Thr659, Ala682 to Met706, Met708 to Leu728, Ile729 to Ser749, Asp750 to Arg774, Leu796 to Ile818, Ser819 to Tyr842, and Leu861 to Cys887. The disordered stretch occupies residues Thr1162–Thr1195. The Nuclear localization signal signature appears at Lys1170–Met1177.

Interacts with EDS1.

It localises to the nucleus. It carries out the reaction NAD(+) + H2O = ADP-D-ribose + nicotinamide + H(+). The chain is Inactive disease resistance protein RPS4 (RPS4) from Arabidopsis thaliana (Mouse-ear cress).